We begin with the raw amino-acid sequence, 124 residues long: Small ribosomal subunit protein bS6m (124 aa).

It belongs to the bacterial ribosomal protein bS6 family. As to quaternary structure, component of the mitochondrial ribosome small subunit (28S) which comprises a 12S rRNA and about 30 distinct proteins.

The protein localises to the mitochondrion. This Bos taurus (Bovine) protein is Small ribosomal subunit protein bS6m (MRPS6).